The primary structure comprises 189 residues: Putative manganese efflux pump MntP (189 aa).

6 consecutive transmembrane segments (helical) span residues Phe-8–Ile-28, Ile-39–Leu-59, Ile-65–Ile-85, Leu-106–Val-126, Ile-131–Phe-151, and Ile-166–Phe-186.

It belongs to the MntP (TC 9.B.29) family.

The protein localises to the cell inner membrane. Probably functions as a manganese efflux pump. This chain is Putative manganese efflux pump MntP, found in Gloeothece citriformis (strain PCC 7424) (Cyanothece sp. (strain PCC 7424)).